A 267-amino-acid polypeptide reads, in one-letter code: Mannose-specific lectin 1 (267 aa).

An N-terminal signal peptide occupies residues 1–24 (MAKSLVLSSLLLALLLAAPLASLA). Bulb-type lectin domains follow at residues 26-136 (NNVL…APNR) and 150-260 (RNVL…SPAR). 2 cysteine pairs are disulfide-bonded: Cys54–Cys76 and Cys178–Cys203.

In terms of assembly, heterotetramer of 2 domain 1 and 2 domain 2 chains arranged as a dimer of domain 1/domain 2 heterodimers.

Its function is as follows. Mannose-specific lectin. Has weak agglutinating activity towards trypsin-treated erythrocytes from rabbit but not from human. The sequence is that of Mannose-specific lectin 1 from Crocus vernus (Dutch crocus).